Consider the following 392-residue polypeptide: Protein RecA (392 aa).

The interval 1-21 is disordered; that stretch reads MALETKPAQDPATEIKHELDP. 83-90 provides a ligand contact to ATP; the sequence is GPESSGKT. The segment at 372-392 is disordered; the sequence is DAAKDTKATAAPAAKSSRAKA. Low complexity predominate over residues 379-392; it reads ATAAPAAKSSRAKA.

Belongs to the RecA family.

The protein resides in the cytoplasm. Can catalyze the hydrolysis of ATP in the presence of single-stranded DNA, the ATP-dependent uptake of single-stranded DNA by duplex DNA, and the ATP-dependent hybridization of homologous single-stranded DNAs. It interacts with LexA causing its activation and leading to its autocatalytic cleavage. The chain is Protein RecA from Bifidobacterium breve.